The following is a 484-amino-acid chain: Probable endopeptidase p60 (484 aa).

The N-terminal stretch at 1–27 (MNMKKATIAATAGIAVTAFAAPTIASA) is a signal peptide. Positions 28–71 (STVVVEAGDTLWGIAQSKGTTVDAIKKANNLTTDKIVPGQKLQV) constitute a LysM 1 domain. Positions 80–144 (KTEKSVSATW…VNGKYLTDKA (65 aa)) constitute an SH3b domain. The disordered stretch occupies residues 150–192 (APTQEVKKETTTQQAAPAAETKTEVKQTTQATTPAPKVAETKE). The segment covering 160-169 (TTQQAAPAAE) has biased composition (low complexity). The region spanning 201-244 (TTHAVKSGDTIWALSVKYGVSVQDIMSWNNLSSSSIYVGQKLAI) is the LysM 2 domain. The disordered stretch occupies residues 254–367 (KAEVKTEAPA…QGSSNNNSNS (114 aa)). 2 stretches are compositionally biased toward low complexity: residues 273–282 (KENTNTNTAT) and 289–367 (ATQQ…NSNS). The interval 311–355 (TNTNANKTNTNTNTNTNTNNTNTNTPSKNTNTNSNTNTNTNSNTN) is 19 X 2 AA tandem repeats of T-N. A NlpC/P60 domain is found at 366–484 (NSSASAIIAE…GKYLVGFGRV (119 aa)). Residue Cys396 is the Nucleophile of the active site. The Proton acceptor role is filled by His446. Asn458 is a catalytic residue.

The protein belongs to the peptidase C40 family.

Its subcellular location is the cell surface. It localises to the secreted. Functionally, this major extracellular protein may be involved in the invasion of non-professional phagocytic cells by Listeria. The polypeptide is Probable endopeptidase p60 (iap) (Listeria monocytogenes serovar 1/2a (strain ATCC BAA-679 / EGD-e)).